The primary structure comprises 182 residues: LPS-assembly lipoprotein LptE (182 aa).

The signal sequence occupies residues 1-19 (MRHRILTLLLGLAVLVTAG). Cys-20 is lipidated: N-palmitoyl cysteine. Residue Cys-20 is the site of S-diacylglycerol cysteine attachment.

This sequence belongs to the LptE lipoprotein family. Component of the lipopolysaccharide transport and assembly complex. Interacts with LptD.

The protein localises to the cell outer membrane. In terms of biological role, together with LptD, is involved in the assembly of lipopolysaccharide (LPS) at the surface of the outer membrane. Required for the proper assembly of LptD. Binds LPS and may serve as the LPS recognition site at the outer membrane. In Photorhabdus laumondii subsp. laumondii (strain DSM 15139 / CIP 105565 / TT01) (Photorhabdus luminescens subsp. laumondii), this protein is LPS-assembly lipoprotein LptE.